Here is a 242-residue protein sequence, read N- to C-terminus: Thaumatin-like protein 2 (242 aa).

The signal sequence occupies residues 1 to 23 (MMKTLGAVLSLSLTLLSFGGAHA). Disulfide bonds link cysteine 32/cysteine 241, cysteine 77/cysteine 87, cysteine 92/cysteine 99, cysteine 147/cysteine 230, cysteine 152/cysteine 213, cysteine 160/cysteine 176, cysteine 180/cysteine 189, and cysteine 190/cysteine 200.

This sequence belongs to the thaumatin family. In terms of tissue distribution, preferentially expressed in the abscission zone of fruit. Also expressed in leaf abscission zone.

It localises to the secreted. May be involved in protecting plant tissues from pathogen infection. The protein is Thaumatin-like protein 2 of Prunus persica (Peach).